Consider the following 307-residue polypeptide: Lipoyl synthase (307 aa).

7 residues coordinate [4Fe-4S] cluster: Cys55, Cys60, Cys66, Cys81, Cys85, Cys88, and Ser292. The Radical SAM core domain maps to 67-281; that stretch reads WEDREATFLI…ARHAEELGFS (215 aa).

The protein belongs to the radical SAM superfamily. Lipoyl synthase family. [4Fe-4S] cluster is required as a cofactor.

The protein resides in the cytoplasm. It carries out the reaction [[Fe-S] cluster scaffold protein carrying a second [4Fe-4S](2+) cluster] + N(6)-octanoyl-L-lysyl-[protein] + 2 oxidized [2Fe-2S]-[ferredoxin] + 2 S-adenosyl-L-methionine + 4 H(+) = [[Fe-S] cluster scaffold protein] + N(6)-[(R)-dihydrolipoyl]-L-lysyl-[protein] + 4 Fe(3+) + 2 hydrogen sulfide + 2 5'-deoxyadenosine + 2 L-methionine + 2 reduced [2Fe-2S]-[ferredoxin]. It participates in protein modification; protein lipoylation via endogenous pathway; protein N(6)-(lipoyl)lysine from octanoyl-[acyl-carrier-protein]: step 2/2. Catalyzes the radical-mediated insertion of two sulfur atoms into the C-6 and C-8 positions of the octanoyl moiety bound to the lipoyl domains of lipoate-dependent enzymes, thereby converting the octanoylated domains into lipoylated derivatives. This chain is Lipoyl synthase, found in Mycobacterium avium (strain 104).